The chain runs to 299 residues: Methionine aminopeptidase (299 aa).

His-64 is a binding site for substrate. A divalent metal cation is bound by residues Asp-84, Asp-95, and His-158. His-166 provides a ligand contact to substrate. A divalent metal cation is bound by residues Glu-191 and Glu-284.

This sequence belongs to the peptidase M24A family. Methionine aminopeptidase archaeal type 2 subfamily. Monomer. Co(2+) is required as a cofactor. The cofactor is Zn(2+). Mn(2+) serves as cofactor. It depends on Fe(2+) as a cofactor.

The enzyme catalyses Release of N-terminal amino acids, preferentially methionine, from peptides and arylamides.. Functionally, removes the N-terminal methionine from nascent proteins. The N-terminal methionine is often cleaved when the second residue in the primary sequence is small and uncharged (Met-Ala-, Cys, Gly, Pro, Ser, Thr, or Val). This is Methionine aminopeptidase from Methanothermobacter thermautotrophicus (strain ATCC 29096 / DSM 1053 / JCM 10044 / NBRC 100330 / Delta H) (Methanobacterium thermoautotrophicum).